Reading from the N-terminus, the 146-residue chain is Large ribosomal subunit protein uL15 (146 aa).

Over residues 1 to 13 the composition is skewed to basic and acidic residues; the sequence is MKLHELKPAEGSR. The segment at 1-51 is disordered; that stretch reads MKLHELKPAEGSRKVRNRVGRGIGSGNGKTAGKGHKGQNARSGGGVRLGFE. Gly residues-rich tracts occupy residues 21–31 and 42–51; these read RGIGSGNGKTA and SGGGVRLGFE.

The protein belongs to the universal ribosomal protein uL15 family. As to quaternary structure, part of the 50S ribosomal subunit.

Functionally, binds to the 23S rRNA. This is Large ribosomal subunit protein uL15 from Bacillus cereus (strain G9842).